The following is a 95-amino-acid chain: Ferredoxin-like protein FixX (95 aa).

The protein belongs to the bacterial-type ferredoxin family. FixX subfamily.

Functionally, could be part of an electron transfer system required for anaerobic carnitine reduction. Could be a 3Fe-4S cluster-containing protein. This is Ferredoxin-like protein FixX (fixX) from Escherichia coli O157:H7.